The following is a 1836-amino-acid chain: InaD-like protein (1836 aa).

The L27 domain maps to 1-65 (MPENPAAEKM…SIKQLKGQLS (65 aa)). PDZ domains are found at residues 134-221 (YIDI…AREV), 248-328 (DVEL…ARDP), and 365-453 (NVEL…VRRK). Phosphoserine is present on residues serine 455, serine 459, and serine 482. The segment covering 456 to 466 (LSASPFEQPSS) has biased composition (polar residues). Residues 456 to 492 (LSASPFEQPSSREAVAEPPEVPELTGSLKPETNSRME) are disordered. Residues 555–641 (DEELQKYSKL…PFTLVCCRRL (87 aa)) enclose the PDZ 4 domain. Serine 647 is subject to Phosphoserine. PDZ domains are found at residues 687–773 (TVEL…ICKP) and 1074–1166 (PRIV…VVQS). Polar residues predominate over residues 1173 to 1191 (VIPSVNNKGKTPPQNQDQN). The interval 1173–1232 (VIPSVNNKGKTPPQNQDQNTQEKKAKRHGTAPPPMKLPPPYRAPSADTEESEEDSALTDK) is disordered. Pro residues predominate over residues 1203-1214 (APPPMKLPPPYR). Position 1217 is a phosphoserine (serine 1217). Positions 1219 to 1228 (DTEESEEDSA) are enriched in acidic residues. The 84-residue stretch at 1245–1328 (LHIIELEKDK…PTRVKLVFIR (84 aa)) folds into the PDZ 7 domain. The segment at 1341 to 1448 (FPVPSHSPSP…ADVTGSGNFQ (108 aa)) is disordered. The span at 1372 to 1383 (PLPERESSKPED) shows a compositional bias: basic and acidic residues. Composition is skewed to polar residues over residues 1415-1426 (YSAQVSSSSQEI) and 1434-1448 (CQST…GNFQ). 2 PDZ domains span residues 1472-1555 (EMII…VIYR) and 1568-1650 (VFLV…EIGR). Threonine 1545 carries the post-translational modification Phosphothreonine. The segment at 1657–1678 (ASSRKTSQNSQGDQHSAHSSCR) is disordered. The 87-residue stretch at 1709–1795 (PRTVEIIREL…FGRIILQVVA (87 aa)) folds into the PDZ 10 domain. The disordered stretch occupies residues 1813-1836 (SQLGSPTADRHPQDPEELLQRTAD).

Forms a ternary complex with PALS1 and CRB1. Component of a complex whose core is composed of ARHGAP17, AMOT, PALS1, INADL/PATJ and PARD3/PAR3. Forms a heterotrimeric complex composed of MMP5, LIN7B and PATJ; the N-terminal L27 domain of PALS1 interacts with the L27 domain of PATJ and the C-terminal L27 domain of PALS1 interacts with the L27 domain of LIN7B. Component of a complex composed of CRB3, PALS1 and PATJ. As part of the Crumbs complex; interacts with WWP1, the interaction is enhanced by AMOTL2 and facilitates WWP1 localization to the plasma membrane. The Crumbs complex promotes monoubiquitination of AMOTL2 by WWP1, which activates the Hippo signaling pathway. Interacts (via N-terminus) with PALS1/PALS (via PDZ domain). Interacts with TJP3/ZO-3 and CLDN1/claudin-1. Interacts with ASIC3, KCNJ10, KCNJ15, GRIN2A, GRIN2B, GRIN2C, GRIN2D, NLGN2, and HTR2A. Interacts with MPP7. Directly interacts with HTR4. Interacts (via PDZ domain 8) with WWC1 (via the ADDV motif). Interacts with SLC6A4. Interacts (via C-terminus) with ARHGEF18. Interacts with NPHP1. Interacts with PARD3/PAR3. Interacts (via PDZ1-6 domains) with TJP1/ZO1; the interaction is required for attachment and extension of TJP1/ZO1 condensates along the apical cell interface. In terms of tissue distribution, abundantly expressed in germ cells, also expressed in testes and seminiferous tubules, with faint expression in Sertoli cells (at protein level).

The protein localises to the cell junction. It is found in the tight junction. Its subcellular location is the apical cell membrane. It localises to the cytoplasm. The protein resides in the perinuclear region. In terms of biological role, scaffolding protein that facilitates the localization of proteins to the cell membrane. Required for the correct formation of tight junctions and epithelial apico-basal polarity. Acts (via its L27 domain) as an apical connector and elongation factor for multistranded TJP1/ZO1 condensates that form a tight junction belt, thereby required for the formation of the tight junction-mediated cell barrier. Positively regulates epithelial cell microtubule elongation and cell migration, possibly via facilitating localization of PRKCI/aPKC and PAR3D/PAR3 at the leading edge of migrating cells. Plays a role in the correct reorientation of the microtubule-organizing center during epithelial migration. May regulate the surface expression and/or function of ASIC3 in sensory neurons. May recruit ARHGEF18 to apical cell-cell boundaries. This Rattus norvegicus (Rat) protein is InaD-like protein.